Here is a 300-residue protein sequence, read N- to C-terminus: 33 kDa chaperonin (300 aa).

Intrachain disulfides connect C240–C242 and C273–C276.

It belongs to the HSP33 family. Post-translationally, under oxidizing conditions two disulfide bonds are formed involving the reactive cysteines. Under reducing conditions zinc is bound to the reactive cysteines and the protein is inactive.

It is found in the cytoplasm. Its function is as follows. Redox regulated molecular chaperone. Protects both thermally unfolding and oxidatively damaged proteins from irreversible aggregation. Plays an important role in the bacterial defense system toward oxidative stress. This is 33 kDa chaperonin from Cyanothece sp. (strain PCC 7425 / ATCC 29141).